A 1020-amino-acid chain; its full sequence is MSLNRQLLFTYYFIVSLILFSDFVSSATLPKEEVDALQSVATALKKSNWNFSVDPCDETLSEGGWRNPNAAKGFEDAVTCNCSSVICHVTNIVLKAQDLQGSLPTDLSGLPFLQELDLTRNYLNGSIPPEWGASSLLNISLLGNRISGSIPKELGNLTTLSGLVLEYNQLSGKIPPELGNLPNLKRLLLSSNNLSGEIPSTFAKLTTLTDLRISDNQFTGAIPDFIQNWKGLEKLVIQASGLVGPIPSAIGLLGTLTDLRITDLSGPESPFPPLRNMTSMKYLILRNCNLTGDLPAYLGQNRKLKNLDLSFNKLSGPIPATYSGLSDVDFIYFTSNMLNGQVPSWMVDQGDTIDITYNNFSKDKTEECQQKSVNTFSSTSPLVANNSSNVSCLSKYTCPKTFYGLHINCGGNEITSNETKYDADTWDTPGYYDSKNGWVSSNTGNFLDDDRTNNGKSKWSNSSELKITNSSIDFRLYTQARLSAISLTYQALCLGKGNYTVNLHFAEIMFNEKNMYSNLGRRYFDIYVQGKREVKDFNIVDEAKGVGKAVVKKFPVMVTNGKLEIRLQWAGKGTQAIPVRGVYGPLISAVSVDPDFIPPKEPGTGTGGGSSVGTVVGSVIASTVFLVLLIGGILWWRGCLRPKSQMEKDFKNLDFQISSFSLRQIKVATDNFDPANKIGEGGFGPVHKGIMTDGTVIAVKQLSAKSKQGNREFLNEIAMISALQHPHLVKLYGCCVEGDQLLLVYEYLENNSLARALFGPQETQIPLNWPMRQKICVGIARGLAYLHEESRLKIVHRDIKATNVLLDKELNPKISDFGLAKLDEEENTHISTRVAGTYGYMAPEYAMRGHLTDKADVYSFGVVALEIVHGKSNTSSRSKADTFYLLDWVHVLREQNTLLEVVDPRLGTDYNKQEALMMIQIGMLCTSPAPGDRPSMSTVVSMLEGHSTVNVEKLLEASVNNEKDEESVRAMKRHYATIGEEEITNTTTTDGPFTSSSTSTANANDLYPVKLDSAYWNTRT.

The first 26 residues, 1–26, serve as a signal peptide directing secretion; that stretch reads MSLNRQLLFTYYFIVSLILFSDFVSS. At 27-614 the chain is on the extracellular side; sequence ATLPKEEVDA…GTGGGSSVGT (588 aa). N50 and N81 each carry an N-linked (GlcNAc...) asparagine glycan. LRR repeat units follow at residues 86–110, 111–134, 136–157, 158–181, 182–204, 206–231, 253–276, 277–301, 302–324, and 326–349; these read ICHVTNIVLKAQDLQGSLPTDLSGL, PFLQELDLTRNYLNGSIPPEWGAS, LLNISLLGNRISGSIPKELGNL, TTLSGLVLEYNQLSGKIPPELGNL, PNLKRLLLSSNNLSGEIPSTFAK, TTLTDLRISDNQFTGAIPDFIQNWKG, LGTLTDLRITDLSGPESPFPPLRN, MTSMKYLILRNCNLTGDLPAYLGQN, RKLKNLDLSFNKLSGPIPATYSG, and SDVDFIYFTSNMLNGQVPSWMVDQ. 3 N-linked (GlcNAc...) asparagine glycosylation sites follow: N124, N138, and N156. A glycan (N-linked (GlcNAc...) asparagine) is linked at N193. N276 and N289 each carry an N-linked (GlcNAc...) asparagine glycan. 7 N-linked (GlcNAc...) asparagine glycosylation sites follow: N359, N386, N389, N417, N461, N469, and N498. One copy of the LRR 11 repeat lies at 479–501; sequence QARLSAISLTYQALCLGKGNYTV. A helical membrane pass occupies residues 615 to 635; it reads VVGSVIASTVFLVLLIGGILW. Over 636-1020 the chain is Cytoplasmic; that stretch reads WRGCLRPKSQ…LDSAYWNTRT (385 aa). The Protein kinase domain occupies 672–949; the sequence is FDPANKIGEG…VSMLEGHSTV (278 aa). ATP-binding positions include 678 to 686 and K700; that span reads IGEGGFGPV. Y745 carries the post-translational modification Phosphotyrosine. Residue D798 is the Proton acceptor of the active site. Position 831 is a phosphoserine (S831). Phosphothreonine occurs at positions 832 and 837. Position 845 is a phosphotyrosine (Y845).

It belongs to the protein kinase superfamily. Ser/Thr protein kinase family.

Its subcellular location is the cell membrane. It carries out the reaction L-seryl-[protein] + ATP = O-phospho-L-seryl-[protein] + ADP + H(+). It catalyses the reaction L-threonyl-[protein] + ATP = O-phospho-L-threonyl-[protein] + ADP + H(+). The chain is Probable leucine-rich repeat receptor-like serine/threonine-protein kinase At3g14840 (LRR-RLK) from Arabidopsis thaliana (Mouse-ear cress).